A 957-amino-acid chain; its full sequence is Glycine dehydrogenase (decarboxylating) 2 (957 aa).

K707 is subject to N6-(pyridoxal phosphate)lysine.

The protein belongs to the GcvP family. As to quaternary structure, the glycine cleavage system is composed of four proteins: P, T, L and H. It depends on pyridoxal 5'-phosphate as a cofactor.

It catalyses the reaction N(6)-[(R)-lipoyl]-L-lysyl-[glycine-cleavage complex H protein] + glycine + H(+) = N(6)-[(R)-S(8)-aminomethyldihydrolipoyl]-L-lysyl-[glycine-cleavage complex H protein] + CO2. Functionally, the glycine cleavage system catalyzes the degradation of glycine. The P protein binds the alpha-amino group of glycine through its pyridoxal phosphate cofactor; CO(2) is released and the remaining methylamine moiety is then transferred to the lipoamide cofactor of the H protein. The chain is Glycine dehydrogenase (decarboxylating) 2 from Pseudomonas fluorescens (strain Pf0-1).